The following is a 454-amino-acid chain: Glutaredoxin domain-containing cysteine-rich protein CG31559 (454 aa).

2 disordered regions span residues 30 to 88 (ETAD…QRQK) and 217 to 239 (RSAR…GSDS). A compositionally biased stretch (polar residues) spans 33–45 (DSGNGSDLESTGL). The segment covering 58 to 69 (SSLGSDSMHGSS) has biased composition (low complexity). Residues 70 to 84 (TEYVRQSASQPSGQR) show a composition bias toward polar residues. Residues 217–227 (RSARSGDEADH) show a composition bias toward basic and acidic residues. The Glutaredoxin domain occupies 295 to 400 (NAKNFKEKDL…QLLKPYKSMA (106 aa)).

The protein belongs to the GRXCR1 family.

The chain is Glutaredoxin domain-containing cysteine-rich protein CG31559 from Drosophila melanogaster (Fruit fly).